The primary structure comprises 185 residues: Endoribonuclease YbeY (185 aa).

Zn(2+)-binding residues include H142, H146, and H152.

This sequence belongs to the endoribonuclease YbeY family. Zn(2+) serves as cofactor.

It localises to the cytoplasm. Single strand-specific metallo-endoribonuclease involved in late-stage 70S ribosome quality control and in maturation of the 3' terminus of the 16S rRNA. In Parvibaculum lavamentivorans (strain DS-1 / DSM 13023 / NCIMB 13966), this protein is Endoribonuclease YbeY.